The following is a 664-amino-acid chain: UvrABC system protein B (664 aa).

Residues 24 to 182 (AGLRAGYRHQ…QLIDLQFERN (159 aa)) form the Helicase ATP-binding domain. 37-44 (GATGTGKT) is an ATP binding site. Positions 90–113 (YYDEYTPEAYVPSKDLYIEKEASI) match the Beta-hairpin motif. The Helicase C-terminal domain maps to 427 to 593 (QIDDLLGEIR…GIAKGVRDLT (167 aa)). The 36-residue stretch at 624–659 (LKLIKDLEKQMKQAAKALAFEKAAALRDQIVELRQA) folds into the UVR domain.

Belongs to the UvrB family. As to quaternary structure, forms a heterotetramer with UvrA during the search for lesions. Interacts with UvrC in an incision complex.

The protein resides in the cytoplasm. Its function is as follows. The UvrABC repair system catalyzes the recognition and processing of DNA lesions. A damage recognition complex composed of 2 UvrA and 2 UvrB subunits scans DNA for abnormalities. Upon binding of the UvrA(2)B(2) complex to a putative damaged site, the DNA wraps around one UvrB monomer. DNA wrap is dependent on ATP binding by UvrB and probably causes local melting of the DNA helix, facilitating insertion of UvrB beta-hairpin between the DNA strands. Then UvrB probes one DNA strand for the presence of a lesion. If a lesion is found the UvrA subunits dissociate and the UvrB-DNA preincision complex is formed. This complex is subsequently bound by UvrC and the second UvrB is released. If no lesion is found, the DNA wraps around the other UvrB subunit that will check the other stand for damage. The polypeptide is UvrABC system protein B (Chloroflexus aggregans (strain MD-66 / DSM 9485)).